Reading from the N-terminus, the 156-residue chain is Ribosomal RNA large subunit methyltransferase H (156 aa).

S-adenosyl-L-methionine contacts are provided by residues Leu72, Gly104, and Leu123 to Leu128.

It belongs to the RNA methyltransferase RlmH family. Homodimer.

Its subcellular location is the cytoplasm. The enzyme catalyses pseudouridine(1915) in 23S rRNA + S-adenosyl-L-methionine = N(3)-methylpseudouridine(1915) in 23S rRNA + S-adenosyl-L-homocysteine + H(+). Specifically methylates the pseudouridine at position 1915 (m3Psi1915) in 23S rRNA. The chain is Ribosomal RNA large subunit methyltransferase H from Maridesulfovibrio salexigens (strain ATCC 14822 / DSM 2638 / NCIMB 8403 / VKM B-1763) (Desulfovibrio salexigens).